The chain runs to 610 residues: Myoneurin (610 aa).

The BTB domain occupies 24–89 (CDCTIVIGEF…IYTGTLNLDS (66 aa)). The interval 169–197 (QGALAKKSSQTKKKKKAFNSPKTGQNKTV) is disordered. 2 short sequence motifs (nuclear localization signal) span residues 174-190 (KKSSQTKKKKKAFNSPK) and 257-262 (KRKRGK). The span at 188–197 (SPKTGQNKTV) shows a compositional bias: polar residues. Phosphoserine is present on S289. C2H2-type zinc fingers lie at residues 302 to 324 (PMCNTCGKVFSEASSLRRHMRIH), 330 to 352 (YVCHLCGKAFTQCNQLKTHVRTH), 358 to 381 (YKCELCDKGFAQKCQLVFHSRMHH), 387 to 409 (YKCDVCNLQFATSSNLKIHARKH), 415 to 437 (YVCDRCGQRFAQASTLTYHVRRH), 443 to 465 (YVCDTCGKAFAVSSSLITHSRKH), 471 to 493 (YICGICGKSFISSGELNKHFRSH), and 499 to 522 (FICELCGNSYTDIKNLKKHKTKVH). A disordered region spans residues 521–556 (VHSGADKTLDSSAEDHTLSEQDSIQKSPLSETMDVK). A compositionally biased stretch (basic and acidic residues) spans 523–539 (SGADKTLDSSAEDHTLS). The span at 540-550 (EQDSIQKSPLS) shows a compositional bias: polar residues.

It belongs to the krueppel C2H2-type zinc-finger protein family. Mainly expressed in the neuromuscular system. Located in and around synaptic myonuclei in adult muscle. Expression is dysregulated after nerve injury. Also found in the testis, ovary and placenta.

The protein resides in the nucleus. The sequence is that of Myoneurin (MYNN) from Homo sapiens (Human).